We begin with the raw amino-acid sequence, 62 residues long: Translational regulator CsrA (62 aa).

This sequence belongs to the CsrA/RsmA family. Homodimer; the beta-strands of each monomer intercalate to form a hydrophobic core, while the alpha-helices form wings that extend away from the core.

The protein localises to the cytoplasm. Its function is as follows. A key translational regulator that binds mRNA to regulate translation initiation and/or mRNA stability. Mediates global changes in gene expression, shifting from rapid growth to stress survival by linking envelope stress, the stringent response and the catabolite repression systems. Usually binds in the 5'-UTR; binding at or near the Shine-Dalgarno sequence prevents ribosome-binding, repressing translation, binding elsewhere in the 5'-UTR can activate translation and/or stabilize the mRNA. Its function is antagonized by small RNA(s). This chain is Translational regulator CsrA, found in Idiomarina loihiensis (strain ATCC BAA-735 / DSM 15497 / L2-TR).